The following is a 218-amino-acid chain: Large ribosomal subunit protein uL1 (218 aa).

The protein belongs to the universal ribosomal protein uL1 family. In terms of assembly, part of the 50S ribosomal subunit.

Its function is as follows. Probably involved in E site tRNA release. Binds directly to 23S rRNA. In terms of biological role, protein L1 is also a translational repressor protein, it controls the translation of its operon by binding to its mRNA. This chain is Large ribosomal subunit protein uL1, found in Saccharolobus solfataricus (strain ATCC 35092 / DSM 1617 / JCM 11322 / P2) (Sulfolobus solfataricus).